The following is a 96-amino-acid chain: RNA-binding protein Hfq (96 aa).

One can recognise a Sm domain in the interval 9 to 68; it reads DPYLNALRRERIPVSIYLVNGIKLQGQIESFDQFVILLKNTVNQMVYKHAISTVVPARSV. The segment at 65-96 is disordered; sequence ARSVSHHNNPQQQQQHSQQTESAAPAAEPQAE. Over residues 70 to 96 the composition is skewed to low complexity; the sequence is HHNNPQQQQQHSQQTESAAPAAEPQAE.

This sequence belongs to the Hfq family. In terms of assembly, homohexamer.

Its function is as follows. RNA chaperone that binds small regulatory RNA (sRNAs) and mRNAs to facilitate mRNA translational regulation in response to envelope stress, environmental stress and changes in metabolite concentrations. Also binds with high specificity to tRNAs. The protein is RNA-binding protein Hfq of Mannheimia succiniciproducens (strain KCTC 0769BP / MBEL55E).